We begin with the raw amino-acid sequence, 128 residues long: Cytochrome c-type biogenesis protein CcmE (128 aa).

Over 1–8 (MQKRVRNR) the chain is Cytoplasmic. Residues 9–29 (LITIIICFCSAFLGISIILYN) form a helical; Signal-anchor for type II membrane protein membrane-spanning segment. Topologically, residues 30–128 (LEKNIVFFLP…KHDENYRPPQ (99 aa)) are periplasmic. 2 residues coordinate heme: histidine 120 and tyrosine 124.

The protein belongs to the CcmE/CycJ family.

The protein resides in the cell inner membrane. In terms of biological role, heme chaperone required for the biogenesis of c-type cytochromes. Transiently binds heme delivered by CcmC and transfers the heme to apo-cytochromes in a process facilitated by CcmF and CcmH. This Rickettsia rickettsii (strain Iowa) protein is Cytochrome c-type biogenesis protein CcmE.